The sequence spans 590 residues: Putative sodium/calcium exchanger 6 (590 aa).

Positions 1 to 19 (MRIHFFAFLIILSLVGCDG) are cleaved as a signal peptide. The next 11 helical transmembrane spans lie at 97–117 (IILI…VSSA), 139–159 (VAGV…GAIA), 173–193 (LGEL…VTIF), 208–228 (IAFY…YDHV), 230–250 (IWMP…VILS), 368–388 (PITL…IQVC), 397–417 (PGLW…VLFF), 440–460 (IAWI…LGVV), 499–519 (AAAI…PFTI), 535–555 (YRLL…AMFA), and 568–588 (LVFI…DILV).

The protein belongs to the Ca(2+):cation antiporter (CaCA) (TC 2.A.19) family.

The protein localises to the membrane. The sequence is that of Putative sodium/calcium exchanger 6 (ncx-6) from Caenorhabditis elegans.